We begin with the raw amino-acid sequence, 467 residues long: Uronate isomerase (467 aa).

Belongs to the metallo-dependent hydrolases superfamily. Uronate isomerase family.

The enzyme catalyses D-glucuronate = D-fructuronate. It catalyses the reaction aldehydo-D-galacturonate = keto-D-tagaturonate. The protein operates within carbohydrate metabolism; pentose and glucuronate interconversion. In Actinobacillus succinogenes (strain ATCC 55618 / DSM 22257 / CCUG 43843 / 130Z), this protein is Uronate isomerase.